The following is an 88-amino-acid chain: Small ribosomal subunit protein bS16 (88 aa).

This sequence belongs to the bacterial ribosomal protein bS16 family.

The sequence is that of Small ribosomal subunit protein bS16 from Geobacter sulfurreducens (strain ATCC 51573 / DSM 12127 / PCA).